The primary structure comprises 373 residues: Sorting nexin-21 (373 aa).

Positions 1–107 are disordered; the sequence is MHRGTQEGAM…RSPPPDGQWG (107 aa). Positions 21-37 are enriched in low complexity; that stretch reads ALAGDGPGEAAASPEAE. Polar residues predominate over residues 55–65; that stretch reads SRLSGTLSFTS. A compositionally biased stretch (acidic residues) spans 66–81; the sequence is AEDDEDDEDEDDEEAG. The 118-residue stretch at 129–246 folds into the PX domain; it reads QRLLFEVTSA…DFFVLPELRR (118 aa). 4 residues coordinate a 1,2-diacyl-sn-glycero-3-phospho-(1D-myo-inositol-3-phosphate): Arg171, Ser173, Lys198, and Arg212.

It belongs to the sorting nexin family. In terms of assembly, monomer. Highly expressed in fetus liver, but only weakly expressed in brain, skeleton muscle, smooth muscle, and cardiac muscle, kidney, and adrenal gland.

It localises to the cytoplasmic vesicle membrane. It is found in the early endosome membrane. Its function is as follows. Binds to membranes enriched in phosphatidylinositol 3-phosphate (PtdIns(P3)) and phosphatidylinositol 4,5-bisphosphate. May be involved in several stages of intracellular trafficking. The chain is Sorting nexin-21 (SNX21) from Homo sapiens (Human).